The primary structure comprises 81 residues: Putative membrane protein insertion efficiency factor (81 aa).

This sequence belongs to the UPF0161 family.

It localises to the cell inner membrane. Its function is as follows. Could be involved in insertion of integral membrane proteins into the membrane. This chain is Putative membrane protein insertion efficiency factor, found in Pseudomonas savastanoi pv. phaseolicola (strain 1448A / Race 6) (Pseudomonas syringae pv. phaseolicola (strain 1448A / Race 6)).